Reading from the N-terminus, the 134-residue chain is Phosphoribosyl-AMP cyclohydrolase (134 aa).

Aspartate 80 is a binding site for Mg(2+). A Zn(2+)-binding site is contributed by cysteine 81. Aspartate 82 and aspartate 84 together coordinate Mg(2+). Cysteine 98 and cysteine 105 together coordinate Zn(2+).

Belongs to the PRA-CH family. As to quaternary structure, homodimer. Mg(2+) serves as cofactor. It depends on Zn(2+) as a cofactor.

It is found in the cytoplasm. It carries out the reaction 1-(5-phospho-beta-D-ribosyl)-5'-AMP + H2O = 1-(5-phospho-beta-D-ribosyl)-5-[(5-phospho-beta-D-ribosylamino)methylideneamino]imidazole-4-carboxamide. It participates in amino-acid biosynthesis; L-histidine biosynthesis; L-histidine from 5-phospho-alpha-D-ribose 1-diphosphate: step 3/9. Functionally, catalyzes the hydrolysis of the adenine ring of phosphoribosyl-AMP. The protein is Phosphoribosyl-AMP cyclohydrolase of Bordetella avium (strain 197N).